The primary structure comprises 181 residues: Endoribonuclease YbeY (181 aa).

Positions 115, 119, and 125 each coordinate Zn(2+).

Belongs to the endoribonuclease YbeY family. It depends on Zn(2+) as a cofactor.

The protein resides in the cytoplasm. Functionally, single strand-specific metallo-endoribonuclease involved in late-stage 70S ribosome quality control and in maturation of the 3' terminus of the 16S rRNA. The chain is Endoribonuclease YbeY from Bifidobacterium animalis subsp. lactis (strain AD011).